A 27-amino-acid polypeptide reads, in one-letter code: Cupiennin-3b (27 aa).

Glu-27 is modified (glutamic acid 1-amide).

In terms of tissue distribution, expressed by the venom gland.

It is found in the secreted. The sequence is that of Cupiennin-3b from Cupiennius salei (American wandering spider).